The primary structure comprises 164 residues: ATP synthase subunit b (164 aa).

A helical transmembrane segment spans residues 10–30 (LLISQIVNFCLLAFLLNTFLY).

This sequence belongs to the ATPase B chain family. As to quaternary structure, F-type ATPases have 2 components, F(1) - the catalytic core - and F(0) - the membrane proton channel. F(1) has five subunits: alpha(3), beta(3), gamma(1), delta(1), epsilon(1). F(0) has three main subunits: a(1), b(2) and c(10-14). The alpha and beta chains form an alternating ring which encloses part of the gamma chain. F(1) is attached to F(0) by a central stalk formed by the gamma and epsilon chains, while a peripheral stalk is formed by the delta and b chains.

The protein resides in the cell membrane. In terms of biological role, f(1)F(0) ATP synthase produces ATP from ADP in the presence of a proton or sodium gradient. F-type ATPases consist of two structural domains, F(1) containing the extramembraneous catalytic core and F(0) containing the membrane proton channel, linked together by a central stalk and a peripheral stalk. During catalysis, ATP synthesis in the catalytic domain of F(1) is coupled via a rotary mechanism of the central stalk subunits to proton translocation. Functionally, component of the F(0) channel, it forms part of the peripheral stalk, linking F(1) to F(0). This is ATP synthase subunit b from Herpetosiphon aurantiacus (strain ATCC 23779 / DSM 785 / 114-95).